We begin with the raw amino-acid sequence, 102 residues long: Parathymosin (102 aa).

The tract at residues 1-102 (MSEKSVEAAA…RQKTENGASA (102 aa)) is disordered. N-acetylserine is present on Ser2. Ser2 is modified (phosphoserine). Lys4 bears the N6-acetyllysine mark. Phosphoserine is present on residues Ser5 and Ser13. Residues 13–37 (SAKDLKEKKDKVEEKAGRKERKKEV) show a composition bias toward basic and acidic residues. Lys15 carries the post-translational modification N6-acetyllysine. Residues 38-75 (VEEEENGAEEEEEETAEDGEDDDEGDEEDEEEEEEEDE) are compositionally biased toward acidic residues. Thr52 is modified (phosphothreonine). Lys92 is modified (N6-acetyllysine).

The protein belongs to the pro/parathymosin family.

Its function is as follows. Parathymosin may mediate immune function by blocking the effect of prothymosin alpha which confers resistance to certain opportunistic infections. The protein is Parathymosin (Ptms) of Rattus norvegicus (Rat).